The following is a 286-amino-acid chain: Simplagrin (286 aa).

An N-terminal signal peptide occupies residues 1–20 (MKKFCLIFLLLALTALHVKG). Residues 17 to 179 (HVKGSPIPDE…GSSSGGEESA (163 aa)) form a disordered region. 2 stretches are compositionally biased toward acidic residues: residues 24 to 69 (PDEE…DGQE) and 103 to 129 (VESG…TGGE). An N-linked (GlcNAc...) asparagine glycan is attached at Asn-116. Residues 166–177 (SNRAGSSSGGEE) are compositionally biased toward low complexity.

Belongs to the aegyptin family. Monomeric in solution; likely has an elongated non-globular form. Interacts with human and rat collagens (via a RGQOGVMGF peptide, where O is hydroxyproline). Post-translationally, not glycosylated. In terms of tissue distribution, salivary gland.

Its subcellular location is the secreted. Inhibits host platelet aggregation induced by low concentrations of collagen via blocking the von Willebrand Factor (VWF) interaction with collagen. This chain is Simplagrin, found in Simulium nigrimanum (Black fly).